Here is a 208-residue protein sequence, read N- to C-terminus: Large ribosomal subunit protein uL4 (208 aa).

It belongs to the universal ribosomal protein uL4 family. Part of the 50S ribosomal subunit.

One of the primary rRNA binding proteins, this protein initially binds near the 5'-end of the 23S rRNA. It is important during the early stages of 50S assembly. It makes multiple contacts with different domains of the 23S rRNA in the assembled 50S subunit and ribosome. In terms of biological role, forms part of the polypeptide exit tunnel. This Solibacter usitatus (strain Ellin6076) protein is Large ribosomal subunit protein uL4.